The following is a 283-amino-acid chain: uncharacterized protein (283 aa).

The segment covering 1–10 (MEVNKTTESL) has biased composition (polar residues). Disordered stretches follow at residues 1-96 (MEVN…SGGN) and 255-283 (DQEG…EAQI). 2 stretches are compositionally biased toward basic and acidic residues: residues 14–34 (KVEH…RDVK) and 44–81 (SKQE…VSSR).

It belongs to the chlamydial CPn_0705/CT_671/TC_0042 family.

This is an uncharacterized protein from Chlamydia muridarum (strain MoPn / Nigg).